A 397-amino-acid chain; its full sequence is (S)-8-oxocitronellyl enol synthase ISY2 (397 aa).

Residues 36–38 (TGL), 64–65 (RR), 82–83 (DV), 106–107 (TW), Gln144, Tyr180, Ile207, and 214–216 (SMM) contribute to the NADP(+) site. Residue Tyr180 is part of the active site.

Belongs to the short-chain dehydrogenases/reductases (SDR) family.

The enzyme catalyses (S)-8-oxocitronellyl enol + NADP(+) = (6E)-8-oxogeranial + NADPH + H(+). The catalysed reaction is (S)-8-oxocitronellyl enol + NAD(+) = (6E)-8-oxogeranial + NADH + H(+). Functionally, iridoid synthase that catalyzes the first step in generation of the iridoid ring scaffold using the linear monoterpene (6E)-8-oxogeranial as substrate. Iridoids comprise a large family of distinctive bicyclic monoterpenes that possess a wide range of pharmacological activities, including anticancer, anti-inflammatory, antifungal and antibacterial activities. Catalyzes the conversion of the linear monoterpene (6E)-8-oxogeranial to (S)-8-oxocitronellyl enol, a precursor of nepetalactones, which are metabolites that are both insect-repellent and have euphoric effect in cats. This chain is (S)-8-oxocitronellyl enol synthase ISY2, found in Nepeta cataria (Catnip).